The following is a 1317-amino-acid chain: Immunoglobulin superfamily member 1 (1317 aa).

The first 20 residues, 1 to 20 (MMLRTFTLLLLCIWLNPGMT), serve as a signal peptide directing secretion. 5 Ig-like C2-type domains span residues 21-112 (SLAV…KILE), 114-211 (EAPG…KLVV), 216-302 (PKPT…SDIL), 311-398 (PKTW…ATYN), and 400-481 (VELM…HRSK). Over 21-499 (SLAVESQPEL…GFLTWNSILN (479 aa)) the chain is Extracellular. N-linked (GlcNAc...) asparagine glycosylation occurs at Asn-43. Cysteines 48 and 96 form a disulfide. A disulfide bridge links Cys-238 with Cys-286. Residues Asn-328 and Asn-371 are each glycosylated (N-linked (GlcNAc...) asparagine). 2 cysteine pairs are disulfide-bonded: Cys-333–Cys-382 and Cys-422–Cys-465. The chain crosses the membrane as a helical span at residues 500-520 (EAVRVSLTMQLASLLLLVVWI). The Cytoplasmic segment spans residues 521-531 (RWKCRRLRLRE). Residues 532–552 (AWLLGTAQGVAMLFILMALLC) traverse the membrane as a helical segment. The Extracellular portion of the chain corresponds to 553-1317 (CGLCNGALTE…EVSVELTVPI (765 aa)). 7 consecutive Ig-like C2-type domains span residues 570-658 (TPKP…ALEL), 659-753 (VGTD…ELVI), 758-850 (PKPF…LVVT), 854-938 (PKPT…SSLS), 946-1041 (TDTF…ELIV), 1046-1131 (PKPS…NHSN), and 1142-1223 (PKPS…EPSD). Cysteines 780 and 830 form a disulfide. Asn-871 is a glycosylation site (N-linked (GlcNAc...) asparagine). Residues Cys-876 and Cys-923 are joined by a disulfide bond. Residues Asn-967 and Asn-1063 are each glycosylated (N-linked (GlcNAc...) asparagine). Cystine bridges form between Cys-1068/Cys-1115 and Cys-1164/Cys-1207. The tract at residues 1290–1310 (NQEGEPGTTTNSPSSASQEVS) is disordered. The segment covering 1296–1309 (GTTTNSPSSASQEV) has biased composition (polar residues).

In terms of assembly, interacts with INHA; the interaction is not confirmed by standard receptor binding assays. Interacts with ACVR1B; the interaction appears to be ligand-dependent as it is diminished by inhibin B and activin A. Interacts with ACVR2A, ACVR2B, ACVRL1 and BMPR1B. Interacts with HECTD1.

The protein localises to the membrane. The protein resides in the secreted. Its function is as follows. Seems to be a coreceptor in inhibin signaling, but seems not to be a high-affinity inhibin receptor. Antagonizes activin A signaling in the presence or absence of inhibin B. Necessary to mediate a specific antagonistic effect of inhibin B on activin-stimulated transcription. The chain is Immunoglobulin superfamily member 1 (Igsf1) from Mus musculus (Mouse).